An 85-amino-acid chain; its full sequence is Neurtoxin 10 (85 aa).

The signal sequence occupies residues 1–23 (MKFCVAVSLLIIASMAGVISVSG). The LCN-type CS-alpha/beta domain maps to 24 to 85 (YDVYPRDYAE…NFLSVIWKHC (62 aa)). 3 disulfides stabilise this stretch: Cys38/Cys60, Cys46/Cys65, and Cys50/Cys67.

It belongs to the long (3 C-C) scorpion toxin superfamily. In terms of tissue distribution, expressed by the venom gland.

The protein localises to the secreted. The sequence is that of Neurtoxin 10 from Lychas mucronatus (Chinese swimming scorpion).